Consider the following 175-residue polypeptide: Isopentenyl-diphosphate Delta-isomerase (175 aa).

Positions 23 and 30 each coordinate Mn(2+). The region spanning 28-162 (TLHLAFCVFV…PLRYTPWFRR (135 aa)) is the Nudix hydrolase domain. Cys65 is an active-site residue. His67 contacts Mn(2+). Glu85 lines the Mg(2+) pocket. Residues Glu111 and Glu113 each coordinate Mn(2+). Glu113 is an active-site residue.

Belongs to the IPP isomerase type 1 family. The cofactor is Mg(2+). Mn(2+) is required as a cofactor.

It is found in the cytoplasm. The enzyme catalyses isopentenyl diphosphate = dimethylallyl diphosphate. It functions in the pathway isoprenoid biosynthesis; dimethylallyl diphosphate biosynthesis; dimethylallyl diphosphate from isopentenyl diphosphate: step 1/1. In terms of biological role, catalyzes the 1,3-allylic rearrangement of the homoallylic substrate isopentenyl (IPP) to its highly electrophilic allylic isomer, dimethylallyl diphosphate (DMAPP). This is Isopentenyl-diphosphate Delta-isomerase from Halorhodospira halophila (strain DSM 244 / SL1) (Ectothiorhodospira halophila (strain DSM 244 / SL1)).